The primary structure comprises 272 residues: Formamidopyrimidine-DNA glycosylase (272 aa).

The active-site Schiff-base intermediate with DNA is the proline 2. Catalysis depends on glutamate 3, which acts as the Proton donor. Catalysis depends on lysine 58, which acts as the Proton donor; for beta-elimination activity. DNA-binding residues include histidine 92, arginine 111, and arginine 153. The FPG-type zinc finger occupies 238-272 (NVYGRGGEPCPVCAKPLTEKPLSQRTTVYCTHCQN). The active-site Proton donor; for delta-elimination activity is arginine 262.

The protein belongs to the FPG family. In terms of assembly, monomer. The cofactor is Zn(2+).

It catalyses the reaction Hydrolysis of DNA containing ring-opened 7-methylguanine residues, releasing 2,6-diamino-4-hydroxy-5-(N-methyl)formamidopyrimidine.. The enzyme catalyses 2'-deoxyribonucleotide-(2'-deoxyribose 5'-phosphate)-2'-deoxyribonucleotide-DNA = a 3'-end 2'-deoxyribonucleotide-(2,3-dehydro-2,3-deoxyribose 5'-phosphate)-DNA + a 5'-end 5'-phospho-2'-deoxyribonucleoside-DNA + H(+). Functionally, involved in base excision repair of DNA damaged by oxidation or by mutagenic agents. Acts as a DNA glycosylase that recognizes and removes damaged bases. Has a preference for oxidized purines, such as 7,8-dihydro-8-oxoguanine (8-oxoG). Has AP (apurinic/apyrimidinic) lyase activity and introduces nicks in the DNA strand. Cleaves the DNA backbone by beta-delta elimination to generate a single-strand break at the site of the removed base with both 3'- and 5'-phosphates. The sequence is that of Formamidopyrimidine-DNA glycosylase from Teredinibacter turnerae (strain ATCC 39867 / T7901).